A 266-amino-acid polypeptide reads, in one-letter code: Undecaprenyl-diphosphatase (266 aa).

Transmembrane regions (helical) follow at residues 2–22, 39–59, 86–106, 112–132, 145–165, 184–204, 212–232, and 246–266; these read INIL…FLPI, LPII…IIYY, LKLI…GTFI, MFIL…ILML, ILLV…PGIS, AFEI…LFKY, MVLN…VGII, and LYYF…FFRI.

This sequence belongs to the UppP family.

It localises to the cell inner membrane. The enzyme catalyses di-trans,octa-cis-undecaprenyl diphosphate + H2O = di-trans,octa-cis-undecaprenyl phosphate + phosphate + H(+). Catalyzes the dephosphorylation of undecaprenyl diphosphate (UPP). Confers resistance to bacitracin. The polypeptide is Undecaprenyl-diphosphatase (Borrelia garinii subsp. bavariensis (strain ATCC BAA-2496 / DSM 23469 / PBi) (Borreliella bavariensis)).